The primary structure comprises 603 residues: DNA mismatch repair protein MutL (603 aa).

This sequence belongs to the DNA mismatch repair MutL/HexB family.

Functionally, this protein is involved in the repair of mismatches in DNA. It is required for dam-dependent methyl-directed DNA mismatch repair. May act as a 'molecular matchmaker', a protein that promotes the formation of a stable complex between two or more DNA-binding proteins in an ATP-dependent manner without itself being part of a final effector complex. This chain is DNA mismatch repair protein MutL, found in Bradyrhizobium diazoefficiens (strain JCM 10833 / BCRC 13528 / IAM 13628 / NBRC 14792 / USDA 110).